A 117-amino-acid chain; its full sequence is Antitoxin RelB3 (117 aa).

Antitoxin component of a type II toxin-antitoxin (TA) system. Neutralizes the effect of cognate toxin RelE3, but no other RelE or ParE toxin. The sequence is that of Antitoxin RelB3 (relB3) from Caulobacter vibrioides (strain ATCC 19089 / CIP 103742 / CB 15) (Caulobacter crescentus).